The sequence spans 118 residues: Ly-6/neurotoxin-like protein 1 (118 aa).

The first 22 residues, 1–22 (MTPLLTLFLVVLMGLPLAPVQA), serve as a signal peptide directing secretion. Residues 23–107 (LDCHVCAYNG…LAIPATLALA (85 aa)) form the UPAR/Ly6 domain. 5 cysteine pairs are disulfide-bonded: Cys25/Cys48, Cys28/Cys35, Cys41/Cys66, Cys70/Cys87, and Cys88/Cys93. A lipid anchor (GPI-anchor amidated serine) is attached at Ser95. Positions 96–118 (AGLAIPATLALAPVLLATLWGLL) are cleaved as a propeptide — removed in mature form.

As to quaternary structure, interacts with nAChRs containing alpha-4:beta-2 (CHRNA4:CHRNB2) and alpha-7 (CHRNA7) subunits. Interacts with CHRNA4 probably in the endoplasmic reticulum prior to nAChR pentameric assembly. Interacts with KCNA2/Potassium voltage-gated channel subfamily A member 2. In terms of tissue distribution, expressed in lung predominantly in airway epithelial cells, submucous glands, and smooth muscle cells, in endothelial and smooth muscle cells in vessel walls and in alveolar type II cells (at protein level). Also expressed in brain.

The protein localises to the cell membrane. The protein resides in the cell projection. It is found in the dendrite. Its subcellular location is the endoplasmic reticulum. Its function is as follows. Acts in different tissues through interaction to nicotinic acetylcholine receptors (nAChRs). The proposed role as modulator of nAChR activity seems to be dependent on the nAChR subtype and stoichiometry, and to involve an effect on nAChR trafficking and its cell surface expression, and on single channel properties of the nAChR inserted in the plasma membrane. Modulates functional properties of nicotinic acetylcholine receptors (nAChRs) to prevent excessive excitation, and hence neurodegeneration. Enhances desensitization by increasing both the rate and extent of desensitization of alpha-4:beta-2-containing nAChRs and slowing recovery from desensitization. Promotes large amplitude ACh-evoked currents through alpha-4:beta-2 nAChRs. Is involved in regulation of the nAChR pentameric assembly in the endoplasmic reticulum. Shifts stoichiometry from high sensitivity alpha-4(2):beta-2(3) to low sensitivity alpha-4(3):beta-2(2) nAChR. In vitro modulates alpha-3:beta-4-containing nAChRs. Reduces cell surface expression of (alpha-3:beta-4)(2):beta-4 and (alpha-3:beta-4)(2):alpha-5 nAChRs suggesting an interaction with nAChR alpha-3(-):(+)beta-4 subunit interfaces and an allosteric mode. Corresponding single channel effects characterized by decreased unitary conductance, altered burst proportions and enhanced desensitization/inactivation seem to depend on nAChR alpha:alpha subunit interfaces and are greater in (alpha-3:beta-2)(2):alpha-3 when compared to (alpha-3:beta-2)(2):alpha-5 nAChRs. Prevents plasticity in the primary visual cortex late in life. The protein is Ly-6/neurotoxin-like protein 1 of Macaca mulatta (Rhesus macaque).